We begin with the raw amino-acid sequence, 546 residues long: MRYIVVTGGVMSGLGKGITAASIGRLLMNKGYRVTAIKIDPYINIDAGLMSPFQHGEVYVLKDGGEVDLDLGNYERFLDIELTRDHNITTGKVYSTVIEKERRGEYLGKTVQIIPHITDEIKRRIRQVSRTGGSEICLIEVGGTVGDIESMPFLEAMRQLKYEESGNIFFVHVTLAPMTSDGEQKTKPTQHSVKEMRELGLQPDMIVVRCKKPLLPETKAKIAHFCDVPIEAVISGHDSDDIYRVPLQLEAEGLTKYIMKAMRLFPLEERRDWYDLVQRMDSIREKVSMALVGKYTSGSQCTDPMKDAYLSIREALKHAGIEAGVMPEISWIDAEDLERIQPEKVLRDFDGILVPGGFGARGTEGKMNAIRYAREKGIPYLGICFGMQLAVIEFARNVCGLEGASSTEFGETPHPVIALLPEQEKVRQMGATMRLGNYPAHLIEGTLAHRIYGTTEIVERHRHRYEVNPAYIEVLEKNGLLFSGRNGDLMEIMEIPGHPFFFACQFHPEMRSRPGRPSPPFLAFVEAMKAQRLRRTGSTYTLELTA.

Positions 1-264 (MRYIVVTGGV…TKYIMKAMRL (264 aa)) are amidoligase domain. S12 is a CTP binding site. A UTP-binding site is contributed by S12. ATP is bound by residues 13–18 (GLGKGI) and D70. Positions 70 and 140 each coordinate Mg(2+). CTP-binding positions include 147–149 (DIE), 185–190 (KTKPTQ), and K221. UTP-binding positions include 185–190 (KTKPTQ) and K221. The 237-residue stretch at 298-534 (GSQCTDPMKD…VEAMKAQRLR (237 aa)) folds into the Glutamine amidotransferase type-1 domain. Position 357 (G357) interacts with L-glutamine. The Nucleophile; for glutamine hydrolysis role is filled by C384. L-glutamine contacts are provided by residues 385-388 (FGMQ), E408, and R464. Residues H507 and E509 contribute to the active site.

The protein belongs to the CTP synthase family. In terms of assembly, homotetramer.

It catalyses the reaction UTP + L-glutamine + ATP + H2O = CTP + L-glutamate + ADP + phosphate + 2 H(+). The enzyme catalyses L-glutamine + H2O = L-glutamate + NH4(+). The catalysed reaction is UTP + NH4(+) + ATP = CTP + ADP + phosphate + 2 H(+). Its pathway is pyrimidine metabolism; CTP biosynthesis via de novo pathway; CTP from UDP: step 2/2. With respect to regulation, allosterically activated by GTP, when glutamine is the substrate; GTP has no effect on the reaction when ammonia is the substrate. The allosteric effector GTP functions by stabilizing the protein conformation that binds the tetrahedral intermediate(s) formed during glutamine hydrolysis. Inhibited by the product CTP, via allosteric rather than competitive inhibition. Its function is as follows. Catalyzes the ATP-dependent amination of UTP to CTP with either L-glutamine or ammonia as the source of nitrogen. Regulates intracellular CTP levels through interactions with the four ribonucleotide triphosphates. The protein is CTP synthase of Methanothrix thermoacetophila (strain DSM 6194 / JCM 14653 / NBRC 101360 / PT) (Methanosaeta thermophila).